Here is a 336-residue protein sequence, read N- to C-terminus: Holliday junction branch migration complex subunit RuvB (336 aa).

A large ATPase domain (RuvB-L) region spans residues 4 to 184 (ADRLISAGTT…FGIVQRLEFY (181 aa)). ATP-binding positions include Ile23, Arg24, Gly65, Lys68, Thr69, Thr70, 131–133 (EDY), Arg174, Tyr184, and Arg221. Thr69 provides a ligand contact to Mg(2+). The small ATPAse domain (RuvB-S) stretch occupies residues 185 to 255 (QVPDLQYIVS…IAAQALDMLN (71 aa)). Residues 258 to 336 (AEGFDYMDRK…HFGITPPEMP (79 aa)) are head domain (RuvB-H). Positions 294, 313, and 318 each coordinate DNA.

This sequence belongs to the RuvB family. As to quaternary structure, homohexamer. Forms an RuvA(8)-RuvB(12)-Holliday junction (HJ) complex. HJ DNA is sandwiched between 2 RuvA tetramers; dsDNA enters through RuvA and exits via RuvB. An RuvB hexamer assembles on each DNA strand where it exits the tetramer. Each RuvB hexamer is contacted by two RuvA subunits (via domain III) on 2 adjacent RuvB subunits; this complex drives branch migration. In the full resolvosome a probable DNA-RuvA(4)-RuvB(12)-RuvC(2) complex forms which resolves the HJ.

Its subcellular location is the cytoplasm. It catalyses the reaction ATP + H2O = ADP + phosphate + H(+). The RuvA-RuvB-RuvC complex processes Holliday junction (HJ) DNA during genetic recombination and DNA repair, while the RuvA-RuvB complex plays an important role in the rescue of blocked DNA replication forks via replication fork reversal (RFR). RuvA specifically binds to HJ cruciform DNA, conferring on it an open structure. The RuvB hexamer acts as an ATP-dependent pump, pulling dsDNA into and through the RuvAB complex. RuvB forms 2 homohexamers on either side of HJ DNA bound by 1 or 2 RuvA tetramers; 4 subunits per hexamer contact DNA at a time. Coordinated motions by a converter formed by DNA-disengaged RuvB subunits stimulates ATP hydrolysis and nucleotide exchange. Immobilization of the converter enables RuvB to convert the ATP-contained energy into a lever motion, pulling 2 nucleotides of DNA out of the RuvA tetramer per ATP hydrolyzed, thus driving DNA branch migration. The RuvB motors rotate together with the DNA substrate, which together with the progressing nucleotide cycle form the mechanistic basis for DNA recombination by continuous HJ branch migration. Branch migration allows RuvC to scan DNA until it finds its consensus sequence, where it cleaves and resolves cruciform DNA. The sequence is that of Holliday junction branch migration complex subunit RuvB from Shigella flexneri serotype 5b (strain 8401).